We begin with the raw amino-acid sequence, 659 residues long: Serine/threonine-protein kinase StkP (659 aa).

Over 1-342 (MIQIGKIFAG…PQAPKKHRFK (342 aa)) the chain is Cytoplasmic. Positions 12–273 (YRIVKQIGRG…EMYVDLSSSL (262 aa)) constitute a Protein kinase domain. ATP is bound by residues 18-26 (IGRGGMADV) and Lys42. Asp136 acts as the Proton acceptor in catalysis. Residues 343–363 (MRYLILLASLVLVAASLIWIL) traverse the membrane as a helical segment. The Periplasmic portion of the chain corresponds to 364–659 (SRSPATIAIP…YKPKTTSATP (296 aa)). 4 consecutive PASTA domains span residues 366 to 433 (SPAT…VVSS), 434 to 505 (GKQS…TVAK), 506 to 577 (KATT…TVAK), and 578 to 651 (KVTS…SIYK). The tract at residues 541-561 (EEESSESEPGTIMKQSPGAGT) is disordered.

The protein belongs to the protein kinase superfamily. Ser/Thr protein kinase family. In terms of assembly, homodimer. StkP forms dimers through its transmembrane and extracellular domains. Dimer formation likely promotes autophosphorylation activity and might be necessary for targeting StkP substrate. Interacts with PhpP via its kinase domain. Post-translationally, autophosphorylation occurs predominantly on threonine residue(s) and weakly on serine residue(s). Dephosphorylated by PhpP.

It is found in the cell membrane. The catalysed reaction is L-seryl-[protein] + ATP = O-phospho-L-seryl-[protein] + ADP + H(+). It carries out the reaction L-threonyl-[protein] + ATP = O-phospho-L-threonyl-[protein] + ADP + H(+). StkP is activated continuously during growth and its activity is inhibited upon growth arrest. Inhibited by staurosporine, a known protein kinase inhibitor. Protein kinase involved in signal transduction pathways that regulate various cellular processes. Likely senses intracellular peptidoglycan subunits present in the cell division septa of actively growing cells; thus, intracellular unlinked peptidoglycan may serve as the signal molecules that trigger StkP phosphorylation activity on a set of substrates. Plays a crucial role in the regulation of cell shape and cell division of S.pneumoniae through control of at least DivIVA activity. Is involved in competence triggering, via the transduction of signals culminating directly or indirectly in ComD activation. Is important for the resistance of S.pneumoniae to various environmental stress conditions. Appears to be a global regulator that positively controls the transcription of a set of genes encoding functions involved in cell wall metabolism, pyrimidine biosynthesis, DNA repair, iron uptake, and oxidative stress response, and that seems to down-regulate genes employed in competence. Since StkP is unlikely to directly regulate transcription, the input signal must be transmitted through an effector molecule. Identified target substrates that are specifically phosphorylated by StkP in vivo, mainly on threonine residues, are DivIVA, GlmM, PpaC, MapZ, KhpB (also called EloR/Jag) and StkP itself. Autophosphorylated StkP is a substrate for the cotranscribed protein phosphatase PhpP; PhpP and StkP appear to constitute a functional signaling couple in vivo. The chain is Serine/threonine-protein kinase StkP (stkP) from Streptococcus pneumoniae.